A 35-amino-acid polypeptide reads, in one-letter code: Putative neurotoxin (35 aa).

In terms of domain architecture, LCN-type CS-alpha/beta spans 1–35 (KEGYPKNSEGCKITCLFNDPYCKGLCINLSTQADY).

Expressed by the venom gland.

It localises to the secreted. Functionally, causes paralysis and death in insects (A.domestica). This is Putative neurotoxin from Rhopalurus junceus (Caribbean blue scorpion).